The following is a 235-amino-acid chain: ATP phosphoribosyltransferase (235 aa).

Belongs to the ATP phosphoribosyltransferase family. Short subfamily. Heteromultimer composed of HisG and HisZ subunits.

It localises to the cytoplasm. It catalyses the reaction 1-(5-phospho-beta-D-ribosyl)-ATP + diphosphate = 5-phospho-alpha-D-ribose 1-diphosphate + ATP. It functions in the pathway amino-acid biosynthesis; L-histidine biosynthesis; L-histidine from 5-phospho-alpha-D-ribose 1-diphosphate: step 1/9. Its function is as follows. Catalyzes the condensation of ATP and 5-phosphoribose 1-diphosphate to form N'-(5'-phosphoribosyl)-ATP (PR-ATP). Has a crucial role in the pathway because the rate of histidine biosynthesis seems to be controlled primarily by regulation of HisG enzymatic activity. This Synechococcus sp. (strain JA-2-3B'a(2-13)) (Cyanobacteria bacterium Yellowstone B-Prime) protein is ATP phosphoribosyltransferase.